A 182-amino-acid chain; its full sequence is tRNA-splicing endonuclease (182 aa).

Residues Y119, H127, and K158 contribute to the active site.

Belongs to the tRNA-intron endonuclease family. Archaeal short subfamily. Homotetramer; although the tetramer contains four active sites, only two participate in the cleavage. Therefore, it should be considered as a dimer of dimers.

It catalyses the reaction pretRNA = a 3'-half-tRNA molecule with a 5'-OH end + a 5'-half-tRNA molecule with a 2',3'-cyclic phosphate end + an intron with a 2',3'-cyclic phosphate and a 5'-hydroxyl terminus.. Functionally, endonuclease that removes tRNA introns. Cleaves pre-tRNA at the 5'- and 3'-splice sites to release the intron. The products are an intron and two tRNA half-molecules bearing 2',3' cyclic phosphate and 5'-OH termini. Recognizes a pseudosymmetric substrate in which 2 bulged loops of 3 bases are separated by a stem of 4 bp. This Saccharolobus islandicus (strain L.S.2.15 / Lassen #1) (Sulfolobus islandicus) protein is tRNA-splicing endonuclease.